The following is an 881-amino-acid chain: Valine--tRNA ligase (881 aa).

Residues 49 to 59 carry the 'HIGH' region motif; that stretch reads PNVTGKLHLGH. The 'KMSKS' region motif lies at 526–530; it reads KMSKS. Lys-529 provides a ligand contact to ATP. A coiled-coil region spans residues 810–881; it reads LADLINLDEE…VRQRLADLEK (72 aa).

This sequence belongs to the class-I aminoacyl-tRNA synthetase family. ValS type 1 subfamily. In terms of assembly, monomer.

It is found in the cytoplasm. The enzyme catalyses tRNA(Val) + L-valine + ATP = L-valyl-tRNA(Val) + AMP + diphosphate. Functionally, catalyzes the attachment of valine to tRNA(Val). As ValRS can inadvertently accommodate and process structurally similar amino acids such as threonine, to avoid such errors, it has a 'posttransfer' editing activity that hydrolyzes mischarged Thr-tRNA(Val) in a tRNA-dependent manner. This Bacillus anthracis protein is Valine--tRNA ligase.